A 144-amino-acid chain; its full sequence is UPF0102 protein BURPS668_3819 (144 aa).

The disordered stretch occupies residues 1–28 (MCHAREASLGTGEPEAAPRDNFPREAGS). The segment covering 16 to 28 (AAPRDNFPREAGS) has biased composition (basic and acidic residues).

It belongs to the UPF0102 family.

In Burkholderia pseudomallei (strain 668), this protein is UPF0102 protein BURPS668_3819.